We begin with the raw amino-acid sequence, 145 residues long: Inner membrane protein YiaA (145 aa).

At 1 to 12 the chain is on the cytoplasmic side; it reads MDNKISTYSPAF. Residues 13 to 32 traverse the membrane as a helical segment; it reads SIVSWIALVGGIVTYLLGLW. Over 33–41 the chain is Periplasmic; that stretch reads NAEMQLNEK. A helical membrane pass occupies residues 42–59; that stretch reads GYYFAVLVLGLFSAASYQ. Over 60 to 71 the chain is Cytoplasmic; the sequence is KTVRDKYEGIPT. The helical transmembrane segment at 72–94 threads the bilayer; that stretch reads TSIYYMTCLTVFIISVALLMVGL. Over 95–98 the chain is Periplasmic; that stretch reads WNAT. Residues 99 to 121 traverse the membrane as a helical segment; sequence LLLSEKGFYGLAFFLSLFGAVAV. The Cytoplasmic portion of the chain corresponds to 122–145; the sequence is QKNIRDAGINPPKETQVTQEEYSE.

The protein localises to the cell inner membrane. The protein is Inner membrane protein YiaA (yiaA) of Escherichia coli (strain K12).